The following is a 431-amino-acid chain: tRNA-specific 2-thiouridylase MnmA (431 aa).

ATP is bound by residues alanine 35 to serine 42 and leucine 61. The active-site Nucleophile is the cysteine 129. The cysteines at positions 129 and 226 are disulfide-linked. ATP is bound at residue glycine 153. The tract at residues arginine 176–glutamine 178 is interaction with tRNA. The Cysteine persulfide intermediate role is filled by cysteine 226. The tract at residues proline 407–cysteine 431 is disordered.

It belongs to the MnmA/TRMU family.

The protein localises to the cytoplasm. The enzyme catalyses S-sulfanyl-L-cysteinyl-[protein] + uridine(34) in tRNA + AH2 + ATP = 2-thiouridine(34) in tRNA + L-cysteinyl-[protein] + A + AMP + diphosphate + H(+). Catalyzes the 2-thiolation of uridine at the wobble position (U34) of tRNA, leading to the formation of s(2)U34. The protein is tRNA-specific 2-thiouridylase MnmA of Beijerinckia indica subsp. indica (strain ATCC 9039 / DSM 1715 / NCIMB 8712).